We begin with the raw amino-acid sequence, 323 residues long: Phosphatidylethanolamine:ceramide ethanolaminephosphotransferase (323 aa).

The Cytoplasmic portion of the chain corresponds to 1 to 26 (MAVPPVEMYSGSFWNRMRKPLPLRTQ). A helical transmembrane segment spans residues 27–47 (VIRFTVVFVIVSFILAVALQI). Residues 48–73 (THERMPDPKVTKPLPDLGFEVLHKYP) are Extracellular-facing. The helical transmembrane segment at 74-94 (FLFSVADCCIGFLNILSVFTA) threads the bilayer. Over 95–147 (FKLYLLHRHCVGSGEPELPCNIPGVSRFFLSVWLCKENCRIELRNVHTIAWIR) the chain is Cytoplasmic. The helical transmembrane segment at 148 to 168 (FITSYALLLLSRSVIMVVTSL) threads the bilayer. Residues 169–211 (PNPDDLCQDPPKIENRVKDVILTVLTAGAGSIHCGDLMYSGHT) lie on the Extracellular side of the membrane. His210 is a catalytic residue. Residues 212 to 232 (VILTLHLMFHWIYGAMVHWSF) traverse the membrane as a helical segment. Position 233 (Arg233) is a topological domain, cytoplasmic. Residues 234–254 (PVVTVVAIFGYYCIVASRFHY) form a helical membrane-spanning segment. Residues His253 and Asp257 contribute to the active site. The Extracellular portion of the chain corresponds to 255–257 (TDD). Residues 258–278 (VLVAIYLTIATFIAVGHNADG) traverse the membrane as a helical segment. The Cytoplasmic portion of the chain corresponds to 279–323 (APWQLQLFIRWLPCCGANSREVTEDGVPVAIVIKNEEMMNFEGKS).

Belongs to the sphingomyelin synthase family.

It localises to the membrane. Its function is as follows. Bidirectional lipid ethanolaminephosphotransferase capable of converting phosphatidylethanolamine (PE) and ceramide to ethanolamine-phosphorylceramide (EPC) and diacylglycerol (DAG) and vice versa. Direction is dependent on the relative concentrations of DAG and ceramide as phosphoethanolamine acceptors. Does not function strictly as a SM synthase. Essential for viability of the pathogenic bloodstream stage of this human protozoan parasite and, consequently, can be considered as potential drug target. The protein is Phosphatidylethanolamine:ceramide ethanolaminephosphotransferase of Trypanosoma brucei brucei (strain 927/4 GUTat10.1).